Here is a 453-residue protein sequence, read N- to C-terminus: O-glucose prenyltransferase PaPT (453 aa).

Residue 95 to 96 (AP) participates in L-tryptophan binding. The substrate site is built by K210, Y212, R279, K281, Y283, Y368, and Y435.

It belongs to the tryptophan dimethylallyltransferase family.

It functions in the pathway mycotoxin biosynthesis. In terms of biological role, O-glucose prenyltransferase; part of the 2 gene clusters that mediate the biosynthesis of fusicoccins, diterpene glucosides that display phytohormone-like activity and function as potent activators of plasma membrane H(+)-ATPases in plants by modifying 14-3-3 proteins and cause the plant disease constriction canker. The first step in the pathway is performed by the fusicoccadiene synthase PaFS that possesses both prenyl transferase and terpene cyclase activity, converting isopentenyl diphosphate and dimethylallyl diphosphate into geranylgeranyl diphosphate (GGDP) and successively converting GGDP into fusicocca-2,10(14)-diene, a precursor for fusicoccin H. The second step is the oxidation at the C-8 position by the cytochrome P450 monooxygenase PaP450-2 to yield fusicocca-2,10(14)-diene-8-beta-ol. The cytochrome P450 monooxygenase PaP450-1 then catalyzes the hydroxylation at the C-16 position to produce fusicocca-2,10(14)-diene-8-beta,16-diol. The dioxygenase fc-dox then catalyzes the 16-oxydation of fusicocca-2,10(14)-diene-8-beta,16-diol to yield an aldehyde (8-beta-hydroxyfusicocca-1,10(14)-dien-16-al). The short-chain dehydrogenase/reductase fc-sdr catalyzes the reduction of the aldehyde to yield fusicocca-1,10(14)-diene-8-beta,16-diol. The next step is the hydroxylation at C-9 performed by the cytochrome P450 monooxygenase PaP450-3 that leads to fusicoccin H aglycon which is glycosylated to fusicoccin H by the O-glycosyltransferase PaGT. Hydroxylation at C-12 by the cytochrome P450 monooxygenase PaP450-4 leads then to the production of fusicoccin Q and is followed by methylation by the O-methyltransferase PaMT to yield fusicoccin P. Fusicoccin P is further converted to fusicoccin J via prenylation by the O-glucose prenyltransferase PaPT. Cytochrome P450 monooxygenase PaP450-5 then performs hydroxylation at C-19 to yield dideacetyl-fusicoccin A which is acetylated to 3'-O-deacetyl-fusicoccin A by the O-acetyltransferase PaAT-2. Finally, a another acetylation by the O-acetyltransferase PaAT-1 yields fusicoccin A. In Phomopsis amygdali (Fusicoccum amygdali), this protein is O-glucose prenyltransferase PaPT.